Reading from the N-terminus, the 834-residue chain is Probable basic-leucine zipper transcription factor D (834 aa).

The segment at 83-160 (NNNNMLNDHS…SNNNSSSEGE (78 aa)) is disordered. Residues 90–111 (DHSSSPMRVPNSSPSLYNNSIE) are compositionally biased toward polar residues. Positions 119 to 157 (DNSNNNNNNNNNINVNDINVNDINSNSTNNNESNNNSSS) are enriched in low complexity. A coiled-coil region spans residues 211–246 (SEQQQQQQQQQQQQQQQQQQQQQQQQQHQHLLQEHQ). A disordered region spans residues 378–405 (VVDPPTHNQEDERNVKKQRRLIKNRESA). The region spanning 391–454 (NVKKQRRLIK…KQLAAQNSNS (64 aa)) is the bZIP domain. The interval 393-402 (KKQRRLIKNR) is basic motif. The segment at 407 to 414 (LSRMRKKI) is leucine-zipper. Disordered stretches follow at residues 455 to 504 (NNNS…QQQS) and 550 to 712 (LSMS…KTPQ). Over residues 550–595 (LSMSDSESSPQKSLRLSSNHHSLPDGTFNTIPIDQQTTATTNTKSL) the composition is skewed to polar residues. 2 stretches are compositionally biased toward low complexity: residues 616–651 (NNNN…NNNN) and 694–707 (TTTT…TTST).

Belongs to the bZIP family.

The protein localises to the nucleus. Functionally, probable transcriptional regulator. The protein is Probable basic-leucine zipper transcription factor D (bzpD) of Dictyostelium discoideum (Social amoeba).